We begin with the raw amino-acid sequence, 595 residues long: Phosphomethylpyrimidine synthase (595 aa).

Positions 97-120 (GRDVRPEDNGFTKDDDPRAAREVF) are enriched in basic and acidic residues. The segment at 97 to 134 (GRDVRPEDNGFTKDDDPRAAREVFPRTSSHKPLRAKKG) is disordered. Residues 124-133 (SSHKPLRAKK) are compositionally biased toward basic residues. Substrate is bound by residues N202, M231, Y260, H296, 316–318 (SRG), 357–360 (DGLR), and E396. H400 serves as a coordination point for Zn(2+). Y423 is a binding site for substrate. Residue H464 participates in Zn(2+) binding. [4Fe-4S] cluster is bound by residues C544, C547, and C552.

The protein belongs to the ThiC family. Requires [4Fe-4S] cluster as cofactor.

It carries out the reaction 5-amino-1-(5-phospho-beta-D-ribosyl)imidazole + S-adenosyl-L-methionine = 4-amino-2-methyl-5-(phosphooxymethyl)pyrimidine + CO + 5'-deoxyadenosine + formate + L-methionine + 3 H(+). It participates in cofactor biosynthesis; thiamine diphosphate biosynthesis. Its function is as follows. Catalyzes the synthesis of the hydroxymethylpyrimidine phosphate (HMP-P) moiety of thiamine from aminoimidazole ribotide (AIR) in a radical S-adenosyl-L-methionine (SAM)-dependent reaction. The chain is Phosphomethylpyrimidine synthase from Halalkalibacterium halodurans (strain ATCC BAA-125 / DSM 18197 / FERM 7344 / JCM 9153 / C-125) (Bacillus halodurans).